A 738-amino-acid polypeptide reads, in one-letter code: NAD(P)H-quinone oxidoreductase subunit 5, chloroplastic (738 aa).

17 consecutive transmembrane segments (helical) span residues 9 to 29, 39 to 59, 89 to 109, 125 to 145, 147 to 167, 185 to 205, 219 to 239, 258 to 278, 280 to 300, 327 to 347, 354 to 374, 396 to 416, 425 to 445, 542 to 562, 610 to 630, 691 to 711, and 717 to 737; these read WVIP…LFLI, IWAF…LHLS, VDPL…LVLI, FVYI…SNLI, IYFF…FWFT, GDFG…SLEF, NGIN…GAVA, TPIS…FLLA, LLPL…VGTI, LGYM…FHLI, ALLF…VGYS, TTFL…CFWS, WLYS…TAFY, LFPL…GIPF, SLAI…YSFF, GVID…GEEI, and GRIS…LFFI.

It belongs to the complex I subunit 5 family. In terms of assembly, NDH is composed of at least 16 different subunits, 5 of which are encoded in the nucleus.

The protein localises to the plastid. It is found in the chloroplast thylakoid membrane. The enzyme catalyses a plastoquinone + NADH + (n+1) H(+)(in) = a plastoquinol + NAD(+) + n H(+)(out). It carries out the reaction a plastoquinone + NADPH + (n+1) H(+)(in) = a plastoquinol + NADP(+) + n H(+)(out). In terms of biological role, NDH shuttles electrons from NAD(P)H:plastoquinone, via FMN and iron-sulfur (Fe-S) centers, to quinones in the photosynthetic chain and possibly in a chloroplast respiratory chain. The immediate electron acceptor for the enzyme in this species is believed to be plastoquinone. Couples the redox reaction to proton translocation, and thus conserves the redox energy in a proton gradient. The polypeptide is NAD(P)H-quinone oxidoreductase subunit 5, chloroplastic (ndhF) (Saccharum officinarum (Sugarcane)).